A 273-amino-acid chain; its full sequence is Formamidopyrimidine-DNA glycosylase (273 aa).

Pro2 (schiff-base intermediate with DNA) is an active-site residue. Residue Glu3 is the Proton donor of the active site. The active-site Proton donor; for beta-elimination activity is the Lys58. DNA-binding residues include His92, Arg111, and Lys153. The FPG-type zinc-finger motif lies at 238–272 (KVYGREGQSCLSCSSTIIKIKHSGRSTFYCKTCQY). Arg262 acts as the Proton donor; for delta-elimination activity in catalysis.

The protein belongs to the FPG family. In terms of assembly, monomer. Zn(2+) is required as a cofactor.

The enzyme catalyses Hydrolysis of DNA containing ring-opened 7-methylguanine residues, releasing 2,6-diamino-4-hydroxy-5-(N-methyl)formamidopyrimidine.. It carries out the reaction 2'-deoxyribonucleotide-(2'-deoxyribose 5'-phosphate)-2'-deoxyribonucleotide-DNA = a 3'-end 2'-deoxyribonucleotide-(2,3-dehydro-2,3-deoxyribose 5'-phosphate)-DNA + a 5'-end 5'-phospho-2'-deoxyribonucleoside-DNA + H(+). Functionally, involved in base excision repair of DNA damaged by oxidation or by mutagenic agents. Acts as a DNA glycosylase that recognizes and removes damaged bases. Has a preference for oxidized purines, such as 7,8-dihydro-8-oxoguanine (8-oxoG). Has AP (apurinic/apyrimidinic) lyase activity and introduces nicks in the DNA strand. Cleaves the DNA backbone by beta-delta elimination to generate a single-strand break at the site of the removed base with both 3'- and 5'-phosphates. The chain is Formamidopyrimidine-DNA glycosylase from Rickettsia conorii (strain ATCC VR-613 / Malish 7).